The primary structure comprises 339 residues: Ferredoxin--NADP reductase (339 aa).

FAD is bound by residues Asp-36, Gln-44, Tyr-49, Val-89, Phe-123, Asp-290, and Thr-331.

It belongs to the ferredoxin--NADP reductase type 2 family. In terms of assembly, homodimer. It depends on FAD as a cofactor.

The enzyme catalyses 2 reduced [2Fe-2S]-[ferredoxin] + NADP(+) + H(+) = 2 oxidized [2Fe-2S]-[ferredoxin] + NADPH. The sequence is that of Ferredoxin--NADP reductase from Acidiphilium cryptum (strain JF-5).